The primary structure comprises 296 residues: Ribosomal RNA small subunit methyltransferase H (296 aa).

Residues 30-32 (GGH), Asp-49, Phe-76, Asp-97, and Gln-104 each bind S-adenosyl-L-methionine.

It belongs to the methyltransferase superfamily. RsmH family.

It is found in the cytoplasm. It catalyses the reaction cytidine(1402) in 16S rRNA + S-adenosyl-L-methionine = N(4)-methylcytidine(1402) in 16S rRNA + S-adenosyl-L-homocysteine + H(+). Its function is as follows. Specifically methylates the N4 position of cytidine in position 1402 (C1402) of 16S rRNA. The sequence is that of Ribosomal RNA small subunit methyltransferase H from Mesomycoplasma hyopneumoniae (strain 7448) (Mycoplasma hyopneumoniae).